We begin with the raw amino-acid sequence, 812 residues long: Valine--tRNA ligase (812 aa).

A 'HIGH' region motif is present at residues 46-56 (PTVSGQLHIGH). The short motif at 536–540 (KMSKS) is the 'KMSKS' region element. K539 is a binding site for ATP.

It belongs to the class-I aminoacyl-tRNA synthetase family. ValS type 2 subfamily. As to quaternary structure, monomer.

The protein localises to the cytoplasm. The enzyme catalyses tRNA(Val) + L-valine + ATP = L-valyl-tRNA(Val) + AMP + diphosphate. Functionally, catalyzes the attachment of valine to tRNA(Val). As ValRS can inadvertently accommodate and process structurally similar amino acids such as threonine, to avoid such errors, it has a 'posttransfer' editing activity that hydrolyzes mischarged Thr-tRNA(Val) in a tRNA-dependent manner. The chain is Valine--tRNA ligase from Rickettsia akari (strain Hartford).